Here is a 953-residue protein sequence, read N- to C-terminus: Probable isoleucine--tRNA ligase, cytoplasmic (953 aa).

A 'HIGH' region motif is present at residues 45–55; sequence PFATGLPHYGH. The short motif at 634 to 638 is the 'KMSKS' region element; the sequence is KMSKR. Lys-637 contributes to the ATP binding site.

Belongs to the class-I aminoacyl-tRNA synthetase family.

Its subcellular location is the cytoplasm. It carries out the reaction tRNA(Ile) + L-isoleucine + ATP = L-isoleucyl-tRNA(Ile) + AMP + diphosphate. This chain is Probable isoleucine--tRNA ligase, cytoplasmic, found in Enterocytozoon bieneusi (strain H348) (Microsporidian parasite).